The following is a 327-amino-acid chain: Eukaryotic translation initiation factor 3 subunit I (327 aa).

WD repeat units lie at residues 8–49 (GHER…GSYD), 51–89 (HNGA…CLYT), 188–227 (VHRY…KLKQ), 229–268 (KSER…GHFE), and 285–324 (GHFG…LGFT).

Belongs to the eIF-3 subunit I family. In terms of assembly, component of the eukaryotic translation initiation factor 3 (eIF-3) complex.

Its subcellular location is the cytoplasm. Functionally, component of the eukaryotic translation initiation factor 3 (eIF-3) complex, which is involved in protein synthesis of a specialized repertoire of mRNAs and, together with other initiation factors, stimulates binding of mRNA and methionyl-tRNAi to the 40S ribosome. The eIF-3 complex specifically targets and initiates translation of a subset of mRNAs involved in cell proliferation. This Caenorhabditis elegans protein is Eukaryotic translation initiation factor 3 subunit I.